The primary structure comprises 227 residues: Cytochrome c oxidase subunit 2 (227 aa).

Over 1–14 the chain is Mitochondrial intermembrane; sequence MAYPFQLGLQDATS. The helical transmembrane segment at 15-45 threads the bilayer; it reads PIMEELMNFHDHTLMIVFLISSLVLYIISLM. Residues 46 to 59 lie on the Mitochondrial matrix side of the membrane; the sequence is LTTKLTHTSTMDAQ. Residues 60 to 87 traverse the membrane as a helical segment; it reads EVETIWTILPAAILILIALPSLRILYMM. Residues 88–227 are Mitochondrial intermembrane-facing; it reads DEINNPVLTV…YFENWSASMI (140 aa). His-161, Cys-196, Glu-198, Cys-200, His-204, and Met-207 together coordinate Cu cation. Residue Glu-198 coordinates Mg(2+). Tyr-218 is modified (phosphotyrosine).

It belongs to the cytochrome c oxidase subunit 2 family. Component of the cytochrome c oxidase (complex IV, CIV), a multisubunit enzyme composed of 14 subunits. The complex is composed of a catalytic core of 3 subunits MT-CO1, MT-CO2 and MT-CO3, encoded in the mitochondrial DNA, and 11 supernumerary subunits COX4I, COX5A, COX5B, COX6A, COX6B, COX6C, COX7A, COX7B, COX7C, COX8 and NDUFA4, which are encoded in the nuclear genome. The complex exists as a monomer or a dimer and forms supercomplexes (SCs) in the inner mitochondrial membrane with NADH-ubiquinone oxidoreductase (complex I, CI) and ubiquinol-cytochrome c oxidoreductase (cytochrome b-c1 complex, complex III, CIII), resulting in different assemblies (supercomplex SCI(1)III(2)IV(1) and megacomplex MCI(2)III(2)IV(2)). Found in a complex with TMEM177, COA6, COX18, COX20, SCO1 and SCO2. Interacts with TMEM177 in a COX20-dependent manner. Interacts with COX20. Interacts with COX16. Cu cation serves as cofactor.

The protein resides in the mitochondrion inner membrane. It catalyses the reaction 4 Fe(II)-[cytochrome c] + O2 + 8 H(+)(in) = 4 Fe(III)-[cytochrome c] + 2 H2O + 4 H(+)(out). Component of the cytochrome c oxidase, the last enzyme in the mitochondrial electron transport chain which drives oxidative phosphorylation. The respiratory chain contains 3 multisubunit complexes succinate dehydrogenase (complex II, CII), ubiquinol-cytochrome c oxidoreductase (cytochrome b-c1 complex, complex III, CIII) and cytochrome c oxidase (complex IV, CIV), that cooperate to transfer electrons derived from NADH and succinate to molecular oxygen, creating an electrochemical gradient over the inner membrane that drives transmembrane transport and the ATP synthase. Cytochrome c oxidase is the component of the respiratory chain that catalyzes the reduction of oxygen to water. Electrons originating from reduced cytochrome c in the intermembrane space (IMS) are transferred via the dinuclear copper A center (CU(A)) of subunit 2 and heme A of subunit 1 to the active site in subunit 1, a binuclear center (BNC) formed by heme A3 and copper B (CU(B)). The BNC reduces molecular oxygen to 2 water molecules using 4 electrons from cytochrome c in the IMS and 4 protons from the mitochondrial matrix. This chain is Cytochrome c oxidase subunit 2 (MT-CO2), found in Praomys tullbergi (Tullberg's soft-furred rat).